A 102-amino-acid chain; its full sequence is Small ribosomal subunit protein uS10 (102 aa).

It belongs to the universal ribosomal protein uS10 family. Part of the 30S ribosomal subunit.

In terms of biological role, involved in the binding of tRNA to the ribosomes. In Methanothermobacter thermautotrophicus (strain ATCC 29096 / DSM 1053 / JCM 10044 / NBRC 100330 / Delta H) (Methanobacterium thermoautotrophicum), this protein is Small ribosomal subunit protein uS10.